Consider the following 507-residue polypeptide: ATP synthase subunit alpha, plastid (507 aa).

Residue Gly-170 to Thr-177 participates in ATP binding.

This sequence belongs to the ATPase alpha/beta chains family. In terms of assembly, F-type ATPases have 2 components, CF(1) - the catalytic core - and CF(0) - the membrane proton channel. CF(1) has five subunits: alpha(3), beta(3), gamma(1), delta(1), epsilon(1). CF(0) has four main subunits: a, b, b' and c.

The protein localises to the plastid membrane. The enzyme catalyses ATP + H2O + 4 H(+)(in) = ADP + phosphate + 5 H(+)(out). Produces ATP from ADP in the presence of a proton gradient across the membrane. The alpha chain is a regulatory subunit. In Aneura mirabilis (Parasitic liverwort), this protein is ATP synthase subunit alpha, plastid.